The chain runs to 378 residues: Queuine tRNA-ribosyltransferase (378 aa).

Asp-89 acts as the Proton acceptor in catalysis. Substrate-binding positions include 89 to 93 (DSGGF), Asp-143, Gln-187, and Gly-214. The interval 245–251 (GVGKPED) is RNA binding. Asp-264 functions as the Nucleophile in the catalytic mechanism. Residues 269–273 (TRNAR) form an RNA binding; important for wobble base 34 recognition region. The Zn(2+) site is built by Cys-302, Cys-304, Cys-307, and His-333.

It belongs to the queuine tRNA-ribosyltransferase family. In terms of assembly, homodimer. Within each dimer, one monomer is responsible for RNA recognition and catalysis, while the other monomer binds to the replacement base PreQ1. Requires Zn(2+) as cofactor.

It catalyses the reaction 7-aminomethyl-7-carbaguanine + guanosine(34) in tRNA = 7-aminomethyl-7-carbaguanosine(34) in tRNA + guanine. Its pathway is tRNA modification; tRNA-queuosine biosynthesis. Functionally, catalyzes the base-exchange of a guanine (G) residue with the queuine precursor 7-aminomethyl-7-deazaguanine (PreQ1) at position 34 (anticodon wobble position) in tRNAs with GU(N) anticodons (tRNA-Asp, -Asn, -His and -Tyr). Catalysis occurs through a double-displacement mechanism. The nucleophile active site attacks the C1' of nucleotide 34 to detach the guanine base from the RNA, forming a covalent enzyme-RNA intermediate. The proton acceptor active site deprotonates the incoming PreQ1, allowing a nucleophilic attack on the C1' of the ribose to form the product. After dissociation, two additional enzymatic reactions on the tRNA convert PreQ1 to queuine (Q), resulting in the hypermodified nucleoside queuosine (7-(((4,5-cis-dihydroxy-2-cyclopenten-1-yl)amino)methyl)-7-deazaguanosine). This is Queuine tRNA-ribosyltransferase from Aeromonas hydrophila subsp. hydrophila (strain ATCC 7966 / DSM 30187 / BCRC 13018 / CCUG 14551 / JCM 1027 / KCTC 2358 / NCIMB 9240 / NCTC 8049).